A 130-amino-acid polypeptide reads, in one-letter code: Small ribosomal subunit protein uS8 (130 aa).

It belongs to the universal ribosomal protein uS8 family. In terms of assembly, part of the 30S ribosomal subunit.

One of the primary rRNA binding proteins, it binds directly to 16S rRNA central domain where it helps coordinate assembly of the platform of the 30S subunit. In Pyrococcus horikoshii (strain ATCC 700860 / DSM 12428 / JCM 9974 / NBRC 100139 / OT-3), this protein is Small ribosomal subunit protein uS8.